The sequence spans 149 residues: MRAVVQRVKEASVTVAGDIKGKIDKGLLVFVGIGEGDTEEDVRYLVDKIVNLRIFEDDTHKMNLSALDLNREILAVSQFTLYGDCRKGRRPNFTGAAKPRYAEKMYDTFVKFLKNTGLKVEEGVFQAMMEVNLINDGPVTILLDSNKQF.

The short motif at Gly-137–Pro-138 is the Gly-cisPro motif, important for rejection of L-amino acids element.

The protein belongs to the DTD family. Homodimer.

The protein localises to the cytoplasm. The catalysed reaction is glycyl-tRNA(Ala) + H2O = tRNA(Ala) + glycine + H(+). It carries out the reaction a D-aminoacyl-tRNA + H2O = a tRNA + a D-alpha-amino acid + H(+). Its function is as follows. An aminoacyl-tRNA editing enzyme that deacylates mischarged D-aminoacyl-tRNAs. Also deacylates mischarged glycyl-tRNA(Ala), protecting cells against glycine mischarging by AlaRS. Acts via tRNA-based rather than protein-based catalysis; rejects L-amino acids rather than detecting D-amino acids in the active site. By recycling D-aminoacyl-tRNA to D-amino acids and free tRNA molecules, this enzyme counteracts the toxicity associated with the formation of D-aminoacyl-tRNA entities in vivo and helps enforce protein L-homochirality. This Halothermothrix orenii (strain H 168 / OCM 544 / DSM 9562) protein is D-aminoacyl-tRNA deacylase.